Here is a 230-residue protein sequence, read N- to C-terminus: 2,3-bisphosphoglycerate-dependent phosphoglycerate mutase (230 aa).

Substrate contacts are provided by residues 8–15, 21–22, R60, 87–90, K98, 114–115, and 183–184; these read RHGESEWN, TG, ERHY, RR, and GN. The active-site Tele-phosphohistidine intermediate is H9. The Proton donor/acceptor role is filled by E87.

The protein belongs to the phosphoglycerate mutase family. BPG-dependent PGAM subfamily.

The enzyme catalyses (2R)-2-phosphoglycerate = (2R)-3-phosphoglycerate. It functions in the pathway carbohydrate degradation; glycolysis; pyruvate from D-glyceraldehyde 3-phosphate: step 3/5. In terms of biological role, catalyzes the interconversion of 2-phosphoglycerate and 3-phosphoglycerate. This is 2,3-bisphosphoglycerate-dependent phosphoglycerate mutase from Streptococcus mutans serotype c (strain ATCC 700610 / UA159).